The primary structure comprises 144 residues: Cytochrome c-type biogenesis protein CcmE (144 aa).

At 1 to 7 the chain is on the cytoplasmic side; the sequence is MTRKQKR. Residues 8–28 form a helical; Signal-anchor for type II membrane protein membrane-spanning segment; the sequence is LAVIGSGMGFLALAAALTFYA. The Periplasmic portion of the chain corresponds to 29–144; the sequence is LGQQTSYFYM…LKKDGLWQEQ (116 aa). The heme site is built by His122 and Tyr126.

Belongs to the CcmE/CycJ family.

The protein resides in the cell inner membrane. Heme chaperone required for the biogenesis of c-type cytochromes. Transiently binds heme delivered by CcmC and transfers the heme to apo-cytochromes in a process facilitated by CcmF and CcmH. This Chelativorans sp. (strain BNC1) protein is Cytochrome c-type biogenesis protein CcmE.